The primary structure comprises 189 residues: Hypoxanthine/guanine phosphoribosyltransferase (189 aa).

The protein belongs to the purine/pyrimidine phosphoribosyltransferase family. Archaeal HPRT subfamily. As to quaternary structure, homodimer.

Its subcellular location is the cytoplasm. It catalyses the reaction IMP + diphosphate = hypoxanthine + 5-phospho-alpha-D-ribose 1-diphosphate. The catalysed reaction is GMP + diphosphate = guanine + 5-phospho-alpha-D-ribose 1-diphosphate. Its pathway is purine metabolism; IMP biosynthesis via salvage pathway; IMP from hypoxanthine: step 1/1. In terms of biological role, catalyzes a salvage reaction resulting in the formation of IMP that is energically less costly than de novo synthesis. The polypeptide is Hypoxanthine/guanine phosphoribosyltransferase (Methanothrix soehngenii (strain ATCC 5969 / DSM 3671 / JCM 10134 / NBRC 103675 / OCM 69 / GP-6) (Methanosaeta concilii)).